We begin with the raw amino-acid sequence, 100 residues long: Large ribosomal subunit protein uL23 (100 aa).

The protein belongs to the universal ribosomal protein uL23 family. Part of the 50S ribosomal subunit. Contacts protein L29, and trigger factor when it is bound to the ribosome.

Its function is as follows. One of the early assembly proteins it binds 23S rRNA. One of the proteins that surrounds the polypeptide exit tunnel on the outside of the ribosome. Forms the main docking site for trigger factor binding to the ribosome. In Thermosynechococcus vestitus (strain NIES-2133 / IAM M-273 / BP-1), this protein is Large ribosomal subunit protein uL23.